The chain runs to 358 residues: B3 domain-containing transcription factor NGA3 (358 aa).

Polar residues predominate over residues 1 to 14; the sequence is MDLSLAPTTTTSSD. The segment at 1–45 is disordered; sequence MDLSLAPTTTTSSDQEQDRDQELTSNIGASSSSGPSGNNNNLPMM. A compositionally biased stretch (low complexity) spans 25-45; the sequence is SNIGASSSSGPSGNNNNLPMM. A DNA-binding region (TF-B3) is located at residues 56–162; the sequence is FDKVVTPSDV…KLYIDWRHRP (107 aa). The segment at 310-358 is disordered; sequence EIGASSSSSSALRLNLSTDHDDDNDDGDDGDDDQFAKKGKSSLSLNFNP. Residues 329-342 are compositionally biased toward acidic residues; that stretch reads HDDDNDDGDDGDDD.

The protein localises to the nucleus. Its function is as follows. Regulates lateral organ growth. Functionally redundant with NGA1, NGA2 and NGA4. The polypeptide is B3 domain-containing transcription factor NGA3 (NGA3) (Arabidopsis thaliana (Mouse-ear cress)).